A 463-amino-acid chain; its full sequence is Phosphomethylpyrimidine synthase (463 aa).

Residues Asn80, Met109, Tyr138, His173, 193–195, 234–237, and Glu273 contribute to the substrate site; these read SRG and DGLR. Zn(2+) is bound at residue His277. Tyr300 is a binding site for substrate. His341 is a Zn(2+) binding site. [4Fe-4S] cluster-binding residues include Cys421, Cys424, and Cys429.

This sequence belongs to the ThiC family. As to quaternary structure, homodimer. [4Fe-4S] cluster serves as cofactor.

The enzyme catalyses 5-amino-1-(5-phospho-beta-D-ribosyl)imidazole + S-adenosyl-L-methionine = 4-amino-2-methyl-5-(phosphooxymethyl)pyrimidine + CO + 5'-deoxyadenosine + formate + L-methionine + 3 H(+). The protein operates within cofactor biosynthesis; thiamine diphosphate biosynthesis. Its function is as follows. Catalyzes the synthesis of the hydroxymethylpyrimidine phosphate (HMP-P) moiety of thiamine from aminoimidazole ribotide (AIR) in a radical S-adenosyl-L-methionine (SAM)-dependent reaction. The sequence is that of Phosphomethylpyrimidine synthase from Anaeromyxobacter sp. (strain K).